Consider the following 62-residue polypeptide: Dual specificity mitogen-activated protein kinase kinase 3 (62 aa).

Residues 1 to 62 (GKIAVSIVKA…VAKTMDAGCK (62 aa)) enclose the Protein kinase domain.

It belongs to the protein kinase superfamily. STE Ser/Thr protein kinase family. MAP kinase kinase subfamily. Activated by phosphorylation on Ser/Thr catalyzed by MAP kinase kinase kinases.

It carries out the reaction L-seryl-[protein] + ATP = O-phospho-L-seryl-[protein] + ADP + H(+). The enzyme catalyses L-threonyl-[protein] + ATP = O-phospho-L-threonyl-[protein] + ADP + H(+). It catalyses the reaction L-tyrosyl-[protein] + ATP = O-phospho-L-tyrosyl-[protein] + ADP + H(+). In terms of biological role, catalyzes the concomitant phosphorylation of a threonine and a tyrosine residue in a Thr-Glu-Tyr sequence located in MAP kinases. This chain is Dual specificity mitogen-activated protein kinase kinase 3 (map2k3), found in Xenopus laevis (African clawed frog).